Reading from the N-terminus, the 613-residue chain is Proton myo-inositol cotransporter hmit-1.2 (613 aa).

The Cytoplasmic portion of the chain corresponds to 1 to 21 (MVAVEFKVSESGRPRPEKNPK). Residues 22 to 42 (LGFFVYLLGSAAIIGGFLFGY) traverse the membrane as a helical segment. Residues 43-69 (DTSVVSAAMLYVPEAPGLKPMGTVWKE) lie on the Extracellular side of the membrane. Residues 70–90 (VIVSITPGMAAVGAWFSGAGS) form a helical membrane-spanning segment. The Cytoplasmic segment spans residues 91 to 96 (DRYGRK). The helical transmembrane segment at 97–117 (PIIIGSTLIFVCGAVICAVAW) threads the bilayer. Residues 118–119 (TK) are Extracellular-facing. The helical transmembrane segment at 120–140 (IVMLIGRIFLGVGIGFASMVV) threads the bilayer. The Cytoplasmic segment spans residues 141–157 (PVYLGEASPTHVRGTLV). Residues 158–178 (SAFAMMISFGQVVANIMGGVF) traverse the membrane as a helical segment. The Extracellular segment spans residues 179-189 (SYWEPYTIGWR). A helical transmembrane segment spans residues 190–210 (LMFAFAGIPALIQFVCFIFLP). Topologically, residues 211 to 279 (ETPRWLYENG…RILKTPHVLK (69 aa)) are cytoplasmic. A helical membrane pass occupies residues 280-300 (ACFIGSMLQAFQQLAGINTIL). Over 301-317 (YYTADIIRSAGIENYHT) the chain is Extracellular. The chain crosses the membrane as a helical span at residues 318-338 (IIWISVILSICNLIGPFAPMF). Over 339–347 (FIEKLGRRK) the chain is Cytoplasmic. A helical membrane pass occupies residues 348 to 368 (LFLFSCAGVVVSLVLIGVSFL). Topologically, residues 369-472 (LVGNDSAPNF…QKHHCTTSYT (104 aa)) are extracellular. 3 N-linked (GlcNAc...) asparagine glycosylation sites follow: Asn-372, Asn-451, and Asn-456. The helical transmembrane segment at 473–493 (ILPIVMMGVYLLTFSCGFTSL) threads the bilayer. Topologically, residues 494–515 (PWVLNSEFYPMWARSTCVSIST) are cytoplasmic. Residues 516-536 (LSNWVFNLIIALTYLSLTHAI) form a helical membrane-spanning segment. At 537-539 (TKY) the chain is on the extracellular side. A helical transmembrane segment spans residues 540–560 (GAFWLYAIFTIIAFIFIYFLV). Residues 561-613 (PETTGYSIDEVEMLFMNKRQRNIAMQARQAKLDAASDKDKNSSTSLSTETITM) are Cytoplasmic-facing. The tract at residues 594 to 613 (AASDKDKNSSTSLSTETITM) is disordered. The span at 602–613 (SSTSLSTETITM) shows a compositional bias: polar residues.

Belongs to the major facilitator superfamily. Sugar transporter (TC 2.A.1.1) family. In terms of tissue distribution, expressed in the excretory canal cell and in pairs of amphid and sheath glia.

Its subcellular location is the cell membrane. The protein resides in the perikaryon. It catalyses the reaction myo-inositol(out) + H(+)(out) = myo-inositol(in) + H(+)(in). Its function is as follows. H(+)-myo-inositol cotransporter. Probably by promoting the transport of myo-inositol regulates intracellular osmosis in response to hyperosmotic stress. This chain is Proton myo-inositol cotransporter hmit-1.2, found in Caenorhabditis elegans.